A 220-amino-acid chain; its full sequence is Putative threonylcarbamoyl-AMP synthase (220 aa).

One can recognise a YrdC-like domain in the interval 17 to 202 (ARGIASAVAA…TPRILRAGPV (186 aa)).

Belongs to the SUA5 family.

The protein resides in the cytoplasm. It catalyses the reaction L-threonine + hydrogencarbonate + ATP = L-threonylcarbamoyladenylate + diphosphate + H2O. Its function is as follows. Required for the formation of a threonylcarbamoyl group on adenosine at position 37 (t(6)A37) in tRNAs that read codons beginning with adenine. Catalyzes the conversion of L-threonine, HCO(3)(-)/CO(2) and ATP to give threonylcarbamoyl-AMP (TC-AMP) as the acyladenylate intermediate, with the release of diphosphate. The sequence is that of Putative threonylcarbamoyl-AMP synthase from Mycobacterium leprae (strain TN).